A 464-amino-acid chain; its full sequence is tRNA-2-methylthio-N(6)-dimethylallyladenosine synthase (464 aa).

The MTTase N-terminal domain occupies 5 to 122; that stretch reads RKLYVKSFGC…LPEMLARVRD (118 aa). 6 residues coordinate [4Fe-4S] cluster: Cys-14, Cys-50, Cys-85, Cys-163, Cys-167, and Cys-170. Residues 149 to 383 enclose the Radical SAM core domain; sequence KKRGPTAFVT…VLEASKTAFD (235 aa). Residues 384–446 form the TRAM domain; the sequence is RACMGRRFDI…PNSLAGQVVD (63 aa).

The protein belongs to the methylthiotransferase family. MiaB subfamily. As to quaternary structure, monomer. It depends on [4Fe-4S] cluster as a cofactor.

Its subcellular location is the cytoplasm. The catalysed reaction is N(6)-dimethylallyladenosine(37) in tRNA + (sulfur carrier)-SH + AH2 + 2 S-adenosyl-L-methionine = 2-methylsulfanyl-N(6)-dimethylallyladenosine(37) in tRNA + (sulfur carrier)-H + 5'-deoxyadenosine + L-methionine + A + S-adenosyl-L-homocysteine + 2 H(+). Functionally, catalyzes the methylthiolation of N6-(dimethylallyl)adenosine (i(6)A), leading to the formation of 2-methylthio-N6-(dimethylallyl)adenosine (ms(2)i(6)A) at position 37 in tRNAs that read codons beginning with uridine. The protein is tRNA-2-methylthio-N(6)-dimethylallyladenosine synthase of Azorhizobium caulinodans (strain ATCC 43989 / DSM 5975 / JCM 20966 / LMG 6465 / NBRC 14845 / NCIMB 13405 / ORS 571).